We begin with the raw amino-acid sequence, 624 residues long: 1-deoxy-D-xylulose-5-phosphate synthase (624 aa).

Residues His-80 and 121–123 contribute to the thiamine diphosphate site; that span reads GHS. Asp-152 provides a ligand contact to Mg(2+). Thiamine diphosphate contacts are provided by residues 153 to 154, Asn-181, Tyr-288, and Glu-370; that span reads GA. Asn-181 contacts Mg(2+).

The protein belongs to the transketolase family. DXPS subfamily. In terms of assembly, homodimer. It depends on Mg(2+) as a cofactor. Thiamine diphosphate is required as a cofactor.

The enzyme catalyses D-glyceraldehyde 3-phosphate + pyruvate + H(+) = 1-deoxy-D-xylulose 5-phosphate + CO2. Its pathway is metabolic intermediate biosynthesis; 1-deoxy-D-xylulose 5-phosphate biosynthesis; 1-deoxy-D-xylulose 5-phosphate from D-glyceraldehyde 3-phosphate and pyruvate: step 1/1. Catalyzes the acyloin condensation reaction between C atoms 2 and 3 of pyruvate and glyceraldehyde 3-phosphate to yield 1-deoxy-D-xylulose-5-phosphate (DXP). The sequence is that of 1-deoxy-D-xylulose-5-phosphate synthase from Proteus mirabilis (strain HI4320).